We begin with the raw amino-acid sequence, 367 residues long: Gibberellin 20 oxidase 3 (367 aa).

The Fe2OG dioxygenase domain occupies 198-304 (DGDPVMRLNH…RRSLTFFLNP (107 aa)). Residue Tyr-208 participates in 2-oxoglutarate binding. His-223, Asp-225, and His-285 together coordinate Fe cation. Positions 295 and 297 each coordinate 2-oxoglutarate.

This sequence belongs to the iron/ascorbate-dependent oxidoreductase family. The cofactor is Fe(2+). It depends on L-ascorbate as a cofactor.

It carries out the reaction gibberellin A12 + 2 2-oxoglutarate + 3 O2 + H(+) = gibberellin A9 + 2 succinate + 3 CO2 + 2 H2O. The enzyme catalyses gibberellin A53 + 2 2-oxoglutarate + 3 O2 + H(+) = gibberellin A20 + 2 succinate + 3 CO2 + 2 H2O. Key oxidase enzyme in the biosynthesis of gibberellin. Catalyzes the formation of bioactive gibberellins (GAs) via a three-step oxidation at C-20 of the GA skeleton. Controls the elongation of the vegetative shoot and plant height by the regulation of active gibberellin levels. The sequence is that of Gibberellin 20 oxidase 3 from Oryza sativa subsp. japonica (Rice).